Consider the following 401-residue polypeptide: S-adenosylmethionine synthase (401 aa).

Histidine 15 contacts ATP. Aspartate 17 contributes to the Mg(2+) binding site. Glutamate 43 contributes to the K(+) binding site. Residues glutamate 56 and glutamine 99 each coordinate L-methionine. The flexible loop stretch occupies residues 99–109; that stretch reads QSPEIGAGVDT. The disordered stretch occupies residues 101 to 132; the sequence is PEIGAGVDTSHEVRGSSSTDEDDRQGAGDQGL. ATP is bound by residues 174–176, aspartate 254, 260–261, alanine 277, and lysine 281; these read DGK and RK. Position 254 (aspartate 254) interacts with L-methionine. Lysine 285 contributes to the L-methionine binding site.

The protein belongs to the AdoMet synthase family. Homotetramer; dimer of dimers. Requires Mg(2+) as cofactor. It depends on K(+) as a cofactor.

Its subcellular location is the cytoplasm. The catalysed reaction is L-methionine + ATP + H2O = S-adenosyl-L-methionine + phosphate + diphosphate. It participates in amino-acid biosynthesis; S-adenosyl-L-methionine biosynthesis; S-adenosyl-L-methionine from L-methionine: step 1/1. In terms of biological role, catalyzes the formation of S-adenosylmethionine (AdoMet) from methionine and ATP. The overall synthetic reaction is composed of two sequential steps, AdoMet formation and the subsequent tripolyphosphate hydrolysis which occurs prior to release of AdoMet from the enzyme. The protein is S-adenosylmethionine synthase of Corynebacterium urealyticum (strain ATCC 43042 / DSM 7109).